A 200-amino-acid polypeptide reads, in one-letter code: Recombination protein RecR (200 aa).

A C4-type zinc finger spans residues 59 to 74 (CEVCGNVCESSPCTIC). The 96-residue stretch at 82 to 177 (GTICVVEEPK…KVTRLASGLP (96 aa)) folds into the Toprim domain.

It belongs to the RecR family.

Its function is as follows. May play a role in DNA repair. It seems to be involved in an RecBC-independent recombinational process of DNA repair. It may act with RecF and RecO. The sequence is that of Recombination protein RecR from Bifidobacterium animalis subsp. lactis (strain AD011).